Reading from the N-terminus, the 370-residue chain is Histidinol-phosphate aminotransferase (370 aa).

K223 carries the post-translational modification N6-(pyridoxal phosphate)lysine.

Belongs to the class-II pyridoxal-phosphate-dependent aminotransferase family. Histidinol-phosphate aminotransferase subfamily. Homodimer. Requires pyridoxal 5'-phosphate as cofactor.

It catalyses the reaction L-histidinol phosphate + 2-oxoglutarate = 3-(imidazol-4-yl)-2-oxopropyl phosphate + L-glutamate. It functions in the pathway amino-acid biosynthesis; L-histidine biosynthesis; L-histidine from 5-phospho-alpha-D-ribose 1-diphosphate: step 7/9. The protein is Histidinol-phosphate aminotransferase of Methylobacterium sp. (strain 4-46).